The primary structure comprises 2061 residues: MLRVIVESASNIPKTKFGKPDPIVSVIFKDEKKKTKKVDNELNPVWNEILEFDLRGIPLDFSSSLGIIVKDFETIGQNKLIGTATVALKDLTGDQSRSLPYKLISLLNEKGQDTGATIDLVIGYDPPSAPHPNDLSGPSVPGMGGDGEEDEGDEDRLDNAVRGPGPKGPVGTVSEAQLARRLTKVKNSRRMLSNKPQDFQIRVRVIEGRQLSGNNIRPVVKVHVCGQTHRTRIKRGNNPFFDELFFYNVNMTPSELMDEIISIRVYNSHSLRADCLMGEFKIDVGFVYDEPGHAVMRKWLLLNDPEDTSSGSKGYMKVSMFVLGTGDEPPPERRDRDNDSDDVESNLLLPAGIALRWVTFLLKIYRAEDIPQMDDAFSQTVKEIFGGNADKKNLVDPFVEVSFAGKKVCTNIIEKNANPEWNQVVNLQIKFPSVCEKIKLTIYDWDRLTKNDVVGTTYLHLSKIAASGGEVEDFSSSGTGAASYTVNTGETEVGFVPTFGPCYLNLYGSPREYTGFPDPYDELNTGKGEGVAYRGRILVELATFLEKTPPDKKLEPISNDDLLVVEKYQRRRKYSLSAVFHSATMLQDVGEAIQFEVSIGNYGNKFDTTCKPLASTTQYSRAVFDGNYYYYLPWAHTKPVVTLTSYWEDISHRLDAVNTLLAMAERLQTNIEALKSGIQGKIPANQLAELWLKLIDEVIEDTRYTLPLTEGKANVTVLDTQIRKLRSRSLSQIHEAAVRMRSEATDVKSTLAEIEDWLDKLMQLTEEPQNSMPDIIIWMIRGEKRLAYARIPAHQVLYSTSGENASGKYCGKTQTIFLKYPQEKNNGPKVPVELRVNIWLGLSAVEKKFNSFAEGTFTVFAEMYENQALMFGKWGTSGLVGRHKFSDVTGKIKLKREFFLPPKGWEWEGEWIVDPERSLLTEADAGHTEFTDEVYQNESRYPGGDWKPAEDTYTDANGDKAASPSELTCPPGWEWEDDAWSYDINRAVDEKGWEYGITIPPDHKPKSWVAAEKMYHTHRRRRLVRKRKKDLTQTASSTARAMEELQDQEGWEYASLIGWKFHWKQRSSDTFRRRRWRRKMAPSETHGAAAIFKLEGALGADTTEDGDEKSLEKQKHSATTVFGANTPIVSCNFDRVYIYHLRCYVYQARNLLALDKDSFSDPYAHICFLHRSKTTEIIHSTLNPTWDQTIIFDEVEIYGEPQTVLQNPPKVIMELFDNDQVGKDEFLGRSIFSPVVKLNSEMDITPKLLWHPVMNGDKACGDVLVTAELILRGKDGSNLPILPPQRAPNLYMVPQGIRPVVQLTAIEILAWGLRNMKNFQMASITSPSLVVECGGERVESVVIKNLKKTPNFPSSVLFMKVFLPKEELYMPPLVIKVIDHRQFGRKPVVGQCTIERLDRFRCDPYAGKEDIVPQLKASLLSAPPCRDIVIEMEDTKPLLASKLTEKEEEIVDWWSKFYASSGEHEKCGQYIQKGYSKLKIYNCELENVAEFEGLTDFSDTFKLYRGKSDENEDPSVVGEFKGSFRIYPLPDDPSVPAPPRQFRELPDSVPQECTVRIYIVRGLELQPQDNNGLCDPYIKITLGKKVIEDRDHYIPNTLNPVFGRMYELSCYLPQEKDLKISVYDYDTFTRDEKVGETIIDLENRFLSRFGSHCGIPEEYCVSGVNTWRDQLRPTQLLQNVARFKGFPQPILSEDGSRIRYGGRDYSLDEFEANKILHQHLGAPEERLALHILRTQGLVPEHVETRTLHSTFQPNISQGKLQMWVDVFPKSLGPPGPPFNITPRKAKKYYLRVIIWNTKDVILDEKSITGEEMSDIYVKGWIPGNEENKQKTDVHYRSLDGEGNFNWRFVFPFDYLPAEQLCIVAKKEHFWSIDQTEFRIPPRLIIQIWDNDKFSLDDYLGFLELDLRHTIIPAKSPEKCRLDMIPDLKAMNPLKAKTASLFEQKSMKGWWPCYAEKDGARVMAGKVEMTLEILNEKEADERPAGKGRDEPNMNPKLDLPNRPETSFLWFTNPCKTMKFIVWRRFKWVIIGLLFLLILLLFVAVLLYSLPNYLSMKIVKPNV.

Positions 1–101 constitute a C2 1 domain; sequence MLRVIVESAS…TGDQSRSLPY (101 aa). The Cytoplasmic portion of the chain corresponds to 1 to 2025; sequence MLRVIVESAS…MKFIVWRRFK (2025 aa). Positions 123-172 are disordered; that stretch reads GYDPPSAPHPNDLSGPSVPGMGGDGEEDEGDEDRLDNAVRGPGPKGPVGT. Residues 146 to 156 show a composition bias toward acidic residues; sequence DGEEDEGDEDR. At Ser-174 the chain carries Phosphoserine. 2 C2 domains span residues 181-300 and 339-474; these read RLTK…RKWL and DSDD…VEDF. A necessary for interaction with EHD2 region spans residues 186–281; sequence KNSRRMLSNK…RADCLMGEFK (96 aa). The interval 323–342 is disordered; it reads LGTGDEPPPERRDRDNDSDD. The Ca(2+) site is built by Asp-390, Asp-396, Asp-444, Asp-446, and Asp-452. Lys-553 is subject to N6-acetyllysine. The residue at position 729 (Ser-729) is a Phosphoserine. Residue Lys-884 is modified to N6-acetyllysine. The tract at residues 938–967 is disordered; sequence ESRYPGGDWKPAEDTYTDANGDKAASPSEL. C2 domains are found at residues 1123–1251 and 1282–1410; these read GANT…LLWH and LPPQ…GKED. Positions 1155, 1161, 1217, and 1219 each coordinate Ca(2+). N6-acetyllysine is present on Lys-1507. C2 domains lie at 1536–1654 and 1772–1920; these read PAPP…SHCG and GPPG…EKCR. Ca(2+) contacts are provided by Asp-1569, Asp-1575, Asp-1624, Asp-1626, Asp-1891, Ser-1894, and Asp-1897. Position 1915 is a phosphoserine (Ser-1915). The chain crosses the membrane as a helical span at residues 2026 to 2046; that stretch reads WVIIGLLFLLILLLFVAVLLY. Topologically, residues 2047 to 2061 are extracellular; that stretch reads SLPNYLSMKIVKPNV.

Belongs to the ferlin family. Interacts with DNM2 and KDR. Interacts with EHD1. Interacts with EHD2; the interaction is direct. Interacts with RIPOR2. Ca(2+) is required as a cofactor. Expressed in myoblast and endothelial cells (at protein level). Highly expressed in cardiac and skeletal muscles. Also present in lung, and at very low levels in kidney, placenta and brain.

The protein localises to the cell membrane. It localises to the nucleus membrane. Its subcellular location is the cytoplasmic vesicle membrane. In terms of biological role, calcium/phospholipid-binding protein that plays a role in the plasmalemma repair mechanism of endothelial cells that permits rapid resealing of membranes disrupted by mechanical stress. Involved in endocytic recycling. Implicated in VEGF signal transduction by regulating the levels of the receptor KDR. The protein is Myoferlin (MYOF) of Homo sapiens (Human).